The chain runs to 355 residues: dTDP-glucose 4,6-dehydratase (355 aa).

Residues 12–13 (FI), 33–36 (DKLT), 59–60 (DI), 81–85 (LAAES), and T100 each bind NAD(+). S85 contributes to the substrate binding site. Position 134 (T134) interacts with substrate. D135 acts as the Proton donor in catalysis. Catalysis depends on proton acceptor residues E136 and Y160. 160 to 164 (YSASK) contacts NAD(+). N189 provides a ligand contact to substrate. N190 is an NAD(+) binding site. Residues 199–200 (KL), 215–217 (PVY), R224, N259, and 293–297 (DRPGH) contribute to the substrate site.

This sequence belongs to the NAD(P)-dependent epimerase/dehydratase family. dTDP-glucose dehydratase subfamily. Homodimer. NAD(+) serves as cofactor.

The catalysed reaction is dTDP-alpha-D-glucose = dTDP-4-dehydro-6-deoxy-alpha-D-glucose + H2O. It participates in carbohydrate biosynthesis; dTDP-L-rhamnose biosynthesis. Its pathway is bacterial outer membrane biogenesis; LPS O-antigen biosynthesis. Functionally, catalyzes the dehydration of dTDP-D-glucose to form dTDP-6-deoxy-D-xylo-4-hexulose via a three-step process involving oxidation, dehydration and reduction. This chain is dTDP-glucose 4,6-dehydratase (rfbB1), found in Neisseria meningitidis serogroup B (strain ATCC BAA-335 / MC58).